The chain runs to 445 residues: T-box transcription factor TBX19 (445 aa).

Positions 45–218 form a DNA-binding region, T-box; the sequence is LEDAPLWQRF…YNPFAKAFLD (174 aa).

Its subcellular location is the nucleus. In terms of biological role, transcriptional regulator involved in developmental processes. Can activate POMC gene expression and repress the alpha glycoprotein subunit and thyroid-stimulating hormone beta promoters. This chain is T-box transcription factor TBX19, found in Canis lupus familiaris (Dog).